Here is a 108-residue protein sequence, read N- to C-terminus: Nucleoid-associated protein BamMC406_1737 (108 aa).

Positions 85 to 95 (ATSQEKMSGMT) are enriched in polar residues. The tract at residues 85-108 (ATSQEKMSGMTSGLPLPPGFKLPF) is disordered. Over residues 99-108 (PLPPGFKLPF) the composition is skewed to pro residues.

Belongs to the YbaB/EbfC family. As to quaternary structure, homodimer.

It localises to the cytoplasm. The protein localises to the nucleoid. Functionally, binds to DNA and alters its conformation. May be involved in regulation of gene expression, nucleoid organization and DNA protection. This is Nucleoid-associated protein BamMC406_1737 from Burkholderia ambifaria (strain MC40-6).